The primary structure comprises 203 residues: Thymidylate kinase (203 aa).

7-14 is a binding site for ATP; it reads GGEGAGKT.

The protein belongs to the thymidylate kinase family.

The catalysed reaction is dTMP + ATP = dTDP + ADP. Functionally, phosphorylation of dTMP to form dTDP in both de novo and salvage pathways of dTTP synthesis. The chain is Thymidylate kinase (tmk) from Chlamydia muridarum (strain MoPn / Nigg).